Here is a 109-residue protein sequence, read N- to C-terminus: Cell division protein ZapA (109 aa).

Residues 21–97 (PDQRDALNQA…QTIEQALLDQ (77 aa)) are a coiled coil.

It belongs to the ZapA family. Type 1 subfamily. Homodimer. Interacts with FtsZ.

It is found in the cytoplasm. Functionally, activator of cell division through the inhibition of FtsZ GTPase activity, therefore promoting FtsZ assembly into bundles of protofilaments necessary for the formation of the division Z ring. It is recruited early at mid-cell but it is not essential for cell division. The polypeptide is Cell division protein ZapA (Salmonella agona (strain SL483)).